The chain runs to 98 residues: uncharacterized protein (98 aa).

It is found in the cytoplasm. This is an uncharacterized protein from Saccharomyces cerevisiae (strain ATCC 204508 / S288c) (Baker's yeast).